The sequence spans 673 residues: DNA ligase (673 aa).

NAD(+) is bound by residues 38–42, 87–88, and Glu119; these read DSVYD and SL. The active-site N6-AMP-lysine intermediate is Lys121. Residues Arg142, Glu179, Lys296, and Lys320 each contribute to the NAD(+) site. 4 residues coordinate Zn(2+): Cys414, Cys417, Cys432, and Cys438. Residues 595–673 enclose the BRCT domain; sequence VVKSEIAGKT…EEAFLKLLKS (79 aa).

Belongs to the NAD-dependent DNA ligase family. LigA subfamily. Mg(2+) is required as a cofactor. The cofactor is Mn(2+).

The enzyme catalyses NAD(+) + (deoxyribonucleotide)n-3'-hydroxyl + 5'-phospho-(deoxyribonucleotide)m = (deoxyribonucleotide)n+m + AMP + beta-nicotinamide D-nucleotide.. DNA ligase that catalyzes the formation of phosphodiester linkages between 5'-phosphoryl and 3'-hydroxyl groups in double-stranded DNA using NAD as a coenzyme and as the energy source for the reaction. It is essential for DNA replication and repair of damaged DNA. This Coxiella burnetii (strain CbuK_Q154) (Coxiella burnetii (strain Q154)) protein is DNA ligase.